Here is a 141-residue protein sequence, read N- to C-terminus: Hemoglobin subunit alpha-D (141 aa).

One can recognise a Globin domain in the interval 1 to 141 (MLTAEDKKLI…VAAVLAGKYR (141 aa)). The heme b site is built by H58 and H87.

It belongs to the globin family. As to quaternary structure, heterotetramer of two alpha-D chains and two beta chains. As to expression, red blood cells.

Functionally, involved in oxygen transport from the lung to the various peripheral tissues. This is Hemoglobin subunit alpha-D (HBAD) from Coturnix japonica (Japanese quail).